The chain runs to 202 residues: ATP-dependent Clp protease proteolytic subunit (202 aa).

Residue serine 106 is the Nucleophile of the active site. Residue histidine 131 is part of the active site.

The protein belongs to the peptidase S14 family. In terms of assembly, fourteen ClpP subunits assemble into 2 heptameric rings which stack back to back to give a disk-like structure with a central cavity, resembling the structure of eukaryotic proteasomes.

Its subcellular location is the cytoplasm. The enzyme catalyses Hydrolysis of proteins to small peptides in the presence of ATP and magnesium. alpha-casein is the usual test substrate. In the absence of ATP, only oligopeptides shorter than five residues are hydrolyzed (such as succinyl-Leu-Tyr-|-NHMec, and Leu-Tyr-Leu-|-Tyr-Trp, in which cleavage of the -Tyr-|-Leu- and -Tyr-|-Trp bonds also occurs).. Functionally, cleaves peptides in various proteins in a process that requires ATP hydrolysis. Has a chymotrypsin-like activity. Plays a major role in the degradation of misfolded proteins. The sequence is that of ATP-dependent Clp protease proteolytic subunit from Paracidovorax citrulli (strain AAC00-1) (Acidovorax citrulli).